Reading from the N-terminus, the 128-residue chain is Large ribosomal subunit protein bL17 (128 aa).

It belongs to the bacterial ribosomal protein bL17 family. Part of the 50S ribosomal subunit. Contacts protein L32.

This chain is Large ribosomal subunit protein bL17, found in Histophilus somni (strain 129Pt) (Haemophilus somnus).